Here is a 178-residue protein sequence, read N- to C-terminus: Nicotinamide-nucleotide adenylyltransferase (178 aa).

It belongs to the archaeal NMN adenylyltransferase family. Homohexamer.

Its subcellular location is the cytoplasm. The catalysed reaction is beta-nicotinamide D-ribonucleotide + ATP + H(+) = diphosphate + NAD(+). Its pathway is cofactor biosynthesis; NAD(+) biosynthesis; NAD(+) from nicotinamide D-ribonucleotide: step 1/1. This Methanothermobacter thermautotrophicus (strain ATCC 29096 / DSM 1053 / JCM 10044 / NBRC 100330 / Delta H) (Methanobacterium thermoautotrophicum) protein is Nicotinamide-nucleotide adenylyltransferase.